The following is an 81-amino-acid chain: LYR motif-containing protein At3g19508 (81 aa).

It belongs to the complex I LYR family. LYRM9 subfamily.

The sequence is that of LYR motif-containing protein At3g19508 from Arabidopsis thaliana (Mouse-ear cress).